Reading from the N-terminus, the 1004-residue chain is E3 ubiquitin-protein ligase NEDD4-like (1004 aa).

The C2 domain occupies 30–154 (LASHHSRGLE…TEDPTMERPY (125 aa)). 2 disordered regions span residues 207–230 (SNDS…WEEK) and 272–407 (AAHR…TPSV). Residues 221 to 254 (PPLPPGWEEKVDNLGRTYYVNHNNRSTQWHRPSL) enclose the WW 1 domain. Position 341 is a phosphoserine (Ser341). At Thr347 the chain carries Phosphothreonine. Composition is skewed to polar residues over residues 347 to 359 (TPDS…SSLI) and 366 to 376 (RLRSCSVTDTV). Ser371 is modified (phosphoserine; by WNK1 and WNK4). At Thr396 the chain carries Phosphothreonine; by SGK1. One can recognise a WW 2 domain in the interval 414-447 (PGLPSGWEERKDAKGRTYYVNHNNRTTTWTRPIM). Positions 453 to 523 (GASGSATNSN…YNSPKPQHKV (71 aa)) are disordered. Ser475 carries the post-translational modification Phosphoserine. A Phosphoserine; by SGK1 modification is found at Ser477. 6 positions are modified to phosphoserine: Ser478, Ser493, Ser504, Ser508, Ser512, and Ser516. The span at 489 to 500 (GAKDSPIRRAVK) shows a compositional bias: basic and acidic residues. WW domains are found at residues 526–559 (SFLP…DPRL) and 577–610 (GPLP…DPRL). The HECT domain occupies 669 to 1003 (RPDVLKARLW…VENAQGFEGV (335 aa)). Cys971 (glycyl thioester intermediate) is an active-site residue.

Interacts with UBE2E3. Interacts with NDFIP1; this interaction activates the E3 ubiquitin-protein ligase. Interacts with NDFIP2; this interaction activates the E3 ubiquitin-protein ligase. Interacts (via WW domains) with SCN1A. Interacts (via WW domains) with SCN2A. Interacts (via WW domains) with SCN3A. Interacts (via WW domains) with SCN5A. Interacts (via WW domains) with SCN8A. Interacts (via WW domains) with SCN9A. Interacts (via WW domains) with SCN10A. Interacts (via WW domains) with CLCN5. Interacts with SMAD2. Interacts with SMAD3. Interacts with SMAD6. Interacts with SMAD7. The phosphorylated form interacts with 14-3-3 proteins. Interacts with TNK2. Interacts with WNK1. Interacts with SGK1. Interacts (via C2 domain) with NPC2. Interacts with ARRDC4. Interacts with KCNQ1; promotes internalization of KCNQ1. Interacts (via domains WW1, 3 and 4) with USP36; the interaction inhibits ubiquitination of, at least, NTRK1, KCNQ2 and KCNQ3 by NEDD4L. Interacts with PRRG4 (via cytoplasmic domain). Interacts with LDLRAD3; the interaction is direct. Interacts with UBE2D2. Interacts with TTYH2 and TTYH3. In terms of processing, phosphorylated; which impairs interaction with SCNN. Interaction with YWHAH inhibits dephosphorylation. Aldosterone induces Ser-477 phosphorylation by SGK1. Post-translationally, auto-ubiquitinated. Deubiquitinated by USP36, no effect on NEDD4L protein levels. Both proteins interact and regulate each other's ubiquitination levels. Highly expressed in liver and kidney. Also expressed in heart, brain and lung. Isoform 1 is expressed in kidney, lung and gut. Isoform 3 is ubiquitously expressed.

It localises to the cytoplasm. It is found in the golgi apparatus. The protein resides in the endosome. The protein localises to the multivesicular body. It catalyses the reaction S-ubiquitinyl-[E2 ubiquitin-conjugating enzyme]-L-cysteine + [acceptor protein]-L-lysine = [E2 ubiquitin-conjugating enzyme]-L-cysteine + N(6)-ubiquitinyl-[acceptor protein]-L-lysine.. The catalysed reaction is [E2 ubiquitin-conjugating enzyme]-S-ubiquitinyl-L-cysteine + [acceptor protein]-L-cysteine = [E2 ubiquitin-conjugating enzyme]-L-cysteine + [acceptor protein]-S-ubiquitinyl-L-cysteine.. It participates in protein modification; protein ubiquitination. With respect to regulation, activated by NDFIP1- and NDFIP2-binding. Functionally, E3 ubiquitin-protein ligase that mediates the polyubiquitination of lysine and cysteine residues on target proteins and is thereby implicated in the regulation of various signaling pathways including autophagy, innate immunity or DNA repair. Inhibits TGF-beta signaling by triggering SMAD2 and TGFBR1 ubiquitination and proteasome-dependent degradation. Downregulates autophagy and cell growth by ubiquitinating and reducing cellular ULK1 or ASCT2 levels. Promotes ubiquitination and internalization of various plasma membrane channels such as ENaC, SCN2A/Nav1.2, SCN3A/Nav1.3, SCN5A/Nav1.5, SCN9A/Nav1.7, SCN10A/Nav1.8, KCNA3/Kv1.3, KCNH2, EAAT1, KCNQ2/Kv7.2, KCNQ3/Kv7.3 or CLC5. Promotes ubiquitination and degradation of SGK1 and TNK2. Ubiquitinates BRAT1 and this ubiquitination is enhanced in the presence of NDFIP1. Plays a role in dendrite formation by melanocytes. Involved in the regulation of TOR signaling. Ubiquitinates and regulates protein levels of NTRK1 once this one is activated by NGF. Plays a role in antiviral innate immunity by catalyzing 'Lys-29'-linked cysteine ubiquitination of TRAF3, resulting in enhanced 'Lys-48' and 'Lys-63'-linked ubiquitination of TRAF3. Ubiquitinates TTYH2 and TYYH3 and regulates protein levels of TTYH2. The polypeptide is E3 ubiquitin-protein ligase NEDD4-like (Nedd4l) (Mus musculus (Mouse)).